The chain runs to 358 residues: Alanine racemase (358 aa).

Catalysis depends on K34, which acts as the Proton acceptor; specific for D-alanine. K34 carries the N6-(pyridoxal phosphate)lysine modification. R129 serves as a coordination point for substrate. Y254 serves as the catalytic Proton acceptor; specific for L-alanine. M302 serves as a coordination point for substrate.

Belongs to the alanine racemase family. It depends on pyridoxal 5'-phosphate as a cofactor.

It carries out the reaction L-alanine = D-alanine. It participates in amino-acid biosynthesis; D-alanine biosynthesis; D-alanine from L-alanine: step 1/1. Catalyzes the interconversion of L-alanine and D-alanine. May also act on other amino acids. This is Alanine racemase (alr) from Vibrio vulnificus (strain CMCP6).